A 443-amino-acid chain; its full sequence is ATP-dependent protease ATPase subunit HslU (443 aa).

ATP contacts are provided by residues I18, 60–65 (GVGKTE), D256, E321, and R393.

The protein belongs to the ClpX chaperone family. HslU subfamily. A double ring-shaped homohexamer of HslV is capped on each side by a ring-shaped HslU homohexamer. The assembly of the HslU/HslV complex is dependent on binding of ATP.

It localises to the cytoplasm. Its function is as follows. ATPase subunit of a proteasome-like degradation complex; this subunit has chaperone activity. The binding of ATP and its subsequent hydrolysis by HslU are essential for unfolding of protein substrates subsequently hydrolyzed by HslV. HslU recognizes the N-terminal part of its protein substrates and unfolds these before they are guided to HslV for hydrolysis. The protein is ATP-dependent protease ATPase subunit HslU of Vibrio cholerae serotype O1 (strain ATCC 39315 / El Tor Inaba N16961).